A 121-amino-acid chain; its full sequence is Large ribosomal subunit protein bL20 (121 aa).

The protein belongs to the bacterial ribosomal protein bL20 family.

Its function is as follows. Binds directly to 23S ribosomal RNA and is necessary for the in vitro assembly process of the 50S ribosomal subunit. It is not involved in the protein synthesizing functions of that subunit. The sequence is that of Large ribosomal subunit protein bL20 from Chlamydia felis (strain Fe/C-56) (Chlamydophila felis).